The sequence spans 78 residues: D-alanyl carrier protein (78 aa).

Residues 1 to 78 (MEFKEQVLDL…KIVEALEELR (78 aa)) form the Carrier domain. Ser36 is modified (O-(pantetheine 4'-phosphoryl)serine).

Belongs to the DltC family. Post-translationally, 4'-phosphopantetheine is transferred from CoA to a specific serine of apo-DCP.

It localises to the cytoplasm. It participates in cell wall biogenesis; lipoteichoic acid biosynthesis. Carrier protein involved in the D-alanylation of lipoteichoic acid (LTA). The loading of thioester-linked D-alanine onto DltC is catalyzed by D-alanine--D-alanyl carrier protein ligase DltA. The DltC-carried D-alanyl group is further transferred to cell membrane phosphatidylglycerol (PG) by forming an ester bond, probably catalyzed by DltD. D-alanylation of LTA plays an important role in modulating the properties of the cell wall in Gram-positive bacteria, influencing the net charge of the cell wall. In Staphylococcus haemolyticus (strain JCSC1435), this protein is D-alanyl carrier protein.